The primary structure comprises 1223 residues: Glycerophosphocholine phosphodiesterase GDE1 (1223 aa).

One can recognise an SPX domain in the interval 1–213; that stretch reads MKFGKTFANH…GTNQQMSTMK (213 aa). Basic and acidic residues predominate over residues 43–59; it reads HNKNSYDEGRPPTKMRD. Residues 43 to 64 are disordered; the sequence is HNKNSYDEGRPPTKMRDSSNSA. 6 ANK repeats span residues 427–456, 472–502, 504–533, 538–567, 572–601, and 605–634; these read YKRT…EWNI, ESLT…NVKL, SSSL…DINY, LHET…DLEI, FGWT…NFDI, and GGWT…LVTH. Serine 653 is modified (phosphoserine). The 346-residue stretch at 872-1217 folds into the GP-PDE domain; it reads TRVIGHRGLG…DSVLAIRRGL (346 aa). A divalent metal cation-binding residues include glutamate 911, aspartate 913, and histidine 926. The residue at position 983 (serine 983) is a Phosphoserine.

This sequence belongs to the GDE1 family. Requires a divalent metal cation as cofactor.

It localises to the cytoplasm. It catalyses the reaction sn-glycerol 3-phosphocholine + H2O = sn-glycerol 3-phosphate + choline + H(+). The catalysed reaction is sn-glycero-3-phospho-1D-myo-inositol + H2O = myo-inositol + sn-glycerol 3-phosphate + H(+). Functionally, glycerophosphocholine glycerophosphodiesterase responsible for the hydrolysis of intracellular glycerophosphocholine into glycerol-phosphate and choline. The choline is used for phosphatidyl-choline synthesis. Required for utilization of glycerophosphocholine as phosphate source. May also use glycerophosphoinositol as substrate in vivo. In Saccharomyces cerevisiae (strain ATCC 204508 / S288c) (Baker's yeast), this protein is Glycerophosphocholine phosphodiesterase GDE1.